Here is a 188-residue protein sequence, read N- to C-terminus: MSQDLNSGRIVVLAGPSAVGKSTVVRRLRTDVPDLFFSVSMTTRDPRPGEVDGEDYIYVTREQFEQNIAADKMLEWAEIHGGLQLSGTPREPIEKALAESRPVLVEVDLEGARNVKKMLPQVQTVFLAPPSWEELVDRLTGRGTETQDVIERRLQTAKVEMASQSEFDHVVVNDDVDKAVAAISEILR.

One can recognise a Guanylate kinase-like domain in the interval 8–188; it reads GRIVVLAGPS…AVAAISEILR (181 aa). 15-22 provides a ligand contact to ATP; the sequence is GPSAVGKS.

It belongs to the guanylate kinase family.

The protein resides in the cytoplasm. It carries out the reaction GMP + ATP = GDP + ADP. Its function is as follows. Essential for recycling GMP and indirectly, cGMP. In Corynebacterium jeikeium (strain K411), this protein is Guanylate kinase.